A 71-amino-acid polypeptide reads, in one-letter code: MSEKLIVKCPTCRTEVIWDESSPYRPFCCKRCQLIDLGEWAAEEKRIPSQSESNDSDEWSEMPEQDPKPFN.

Zn(2+)-binding residues include C9, C12, C28, and C32. The tract at residues 43-71 (EEKRIPSQSESNDSDEWSEMPEQDPKPFN) is disordered. Residues 54–64 (NDSDEWSEMPE) show a composition bias toward acidic residues.

The protein belongs to the DNA gyrase inhibitor YacG family. In terms of assembly, interacts with GyrB. The cofactor is Zn(2+).

Inhibits all the catalytic activities of DNA gyrase by preventing its interaction with DNA. Acts by binding directly to the C-terminal domain of GyrB, which probably disrupts DNA binding by the gyrase. This is DNA gyrase inhibitor YacG from Proteus mirabilis (strain HI4320).